The sequence spans 155 residues: SsrA-binding protein (155 aa).

This sequence belongs to the SmpB family.

It is found in the cytoplasm. Functionally, required for rescue of stalled ribosomes mediated by trans-translation. Binds to transfer-messenger RNA (tmRNA), required for stable association of tmRNA with ribosomes. tmRNA and SmpB together mimic tRNA shape, replacing the anticodon stem-loop with SmpB. tmRNA is encoded by the ssrA gene; the 2 termini fold to resemble tRNA(Ala) and it encodes a 'tag peptide', a short internal open reading frame. During trans-translation Ala-aminoacylated tmRNA acts like a tRNA, entering the A-site of stalled ribosomes, displacing the stalled mRNA. The ribosome then switches to translate the ORF on the tmRNA; the nascent peptide is terminated with the 'tag peptide' encoded by the tmRNA and targeted for degradation. The ribosome is freed to recommence translation, which seems to be the essential function of trans-translation. The chain is SsrA-binding protein from Alkaliphilus oremlandii (strain OhILAs) (Clostridium oremlandii (strain OhILAs)).